Consider the following 315-residue polypeptide: Indoleacetate decarboxylase activating enzyme (315 aa).

The Radical SAM core domain maps to 21–311 (HDGPGIRTNV…ADIIEAHGVK (291 aa)). The [4Fe-4S] cluster site is built by C35, C39, C42, C61, C64, C67, C71, C98, C101, C106, and C110. 2 consecutive 4Fe-4S ferredoxin-type domains span residues 52–81 (PQLLYTKMKCIGCMCCARACPYGAVSAITD) and 89–120 (GYVHHDRSKCDKCTTHECLSACFQEALSIAGE). Residues G149, 198–200 (DCK), and H271 each bind S-adenosyl-L-methionine.

It belongs to the organic radical-activating enzymes family. The cofactor is [4Fe-4S] cluster.

The enzyme catalyses glycyl-[protein] + reduced [flavodoxin] + S-adenosyl-L-methionine = glycin-2-yl radical-[protein] + semiquinone [flavodoxin] + 5'-deoxyadenosine + L-methionine + H(+). Its function is as follows. Catalyzes activation of the indoleacetate decarboxylase OsIAD under anaerobic conditions by generation of an organic free radical on a glycine residue, via a homolytic cleavage of S-adenosyl-L-methionine (SAM). This Tractidigestivibacter scatoligenes (Olsenella scatoligenes) protein is Indoleacetate decarboxylase activating enzyme.